The primary structure comprises 465 residues: Glutamate--tRNA ligase (465 aa).

The 'HIGH' region motif lies at 11–21 (PSPTGFIHLGN). The segment covering 120-131 (KPRYDGTWRPEP) has biased composition (basic and acidic residues). The interval 120–139 (KPRYDGTWRPEPGKVLPTPP) is disordered. The 'KMSKS' region motif lies at 243 to 247 (KMSKR). ATP is bound at residue Lys-246.

The protein belongs to the class-I aminoacyl-tRNA synthetase family. Glutamate--tRNA ligase type 1 subfamily. Monomer.

It is found in the cytoplasm. The catalysed reaction is tRNA(Glu) + L-glutamate + ATP = L-glutamyl-tRNA(Glu) + AMP + diphosphate. Catalyzes the attachment of glutamate to tRNA(Glu) in a two-step reaction: glutamate is first activated by ATP to form Glu-AMP and then transferred to the acceptor end of tRNA(Glu). In Ralstonia nicotianae (strain ATCC BAA-1114 / GMI1000) (Ralstonia solanacearum), this protein is Glutamate--tRNA ligase.